The chain runs to 218 residues: MTQDEMKKAAGWAALKYVEKGSIVGVGTGSTVNHFIDALGTMSEEIKGAVSSSVASTEKLEALGIKIFDCNEVASLDIYVDGADEINADREMIKGGGAALTREKIVAAIADKFICIVDGTKAVDVLGTFPLPVEVIPMARSYVARQLVKLGGDPCYREGVITDNGNVILDVYGMKITNPKQLEDQINAIPGVVTVGLFAHRGADVVITGTPEGAKIEE.

Substrate is bound by residues K7, 28-31, 81-84, and 94-97; these read TGST, DGAD, and KGGG. Residue E103 is the Proton acceptor of the active site. K121 is a binding site for substrate.

This sequence belongs to the ribose 5-phosphate isomerase family. In terms of assembly, homodimer.

The enzyme catalyses aldehydo-D-ribose 5-phosphate = D-ribulose 5-phosphate. It participates in carbohydrate degradation; pentose phosphate pathway; D-ribose 5-phosphate from D-ribulose 5-phosphate (non-oxidative stage): step 1/1. In terms of biological role, catalyzes the reversible conversion of ribose-5-phosphate to ribulose 5-phosphate. The protein is Ribose-5-phosphate isomerase A of Vibrio vulnificus (strain YJ016).